Consider the following 375-residue polypeptide: Holliday junction branch migration complex subunit RuvB (375 aa).

The segment covering 1 to 22 has biased composition (polar residues); the sequence is MAIVSSKQSPQPDGSKKPSQAK. Residues 1-44 are disordered; sequence MAIVSSKQSPQPDGSKKPSQAKSVKKSVEHSKPQQTDALLQPEA. The segment at 13–218 is large ATPase domain (RuvB-L); the sequence is DGSKKPSQAK…FGFVQRLRFY (206 aa). Residues leucine 57, arginine 58, glycine 99, lysine 102, threonine 103, threonine 104, 165–167, arginine 208, tyrosine 218, and arginine 255 each bind ATP; that span reads EDF. Threonine 103 serves as a coordination point for Mg(2+). Positions 219–289 are small ATPAse domain (RuvB-S); sequence EADELGQIVL…IAQEALELFN (71 aa). Positions 292–375 are head domain (RuvB-H); that stretch reads PCGLDWTDRR…PPDEQMRLLS (84 aa). 2 residues coordinate DNA: arginine 347 and arginine 352.

It belongs to the RuvB family. Homohexamer. Forms an RuvA(8)-RuvB(12)-Holliday junction (HJ) complex. HJ DNA is sandwiched between 2 RuvA tetramers; dsDNA enters through RuvA and exits via RuvB. An RuvB hexamer assembles on each DNA strand where it exits the tetramer. Each RuvB hexamer is contacted by two RuvA subunits (via domain III) on 2 adjacent RuvB subunits; this complex drives branch migration. In the full resolvosome a probable DNA-RuvA(4)-RuvB(12)-RuvC(2) complex forms which resolves the HJ.

It localises to the cytoplasm. The enzyme catalyses ATP + H2O = ADP + phosphate + H(+). In terms of biological role, the RuvA-RuvB-RuvC complex processes Holliday junction (HJ) DNA during genetic recombination and DNA repair, while the RuvA-RuvB complex plays an important role in the rescue of blocked DNA replication forks via replication fork reversal (RFR). RuvA specifically binds to HJ cruciform DNA, conferring on it an open structure. The RuvB hexamer acts as an ATP-dependent pump, pulling dsDNA into and through the RuvAB complex. RuvB forms 2 homohexamers on either side of HJ DNA bound by 1 or 2 RuvA tetramers; 4 subunits per hexamer contact DNA at a time. Coordinated motions by a converter formed by DNA-disengaged RuvB subunits stimulates ATP hydrolysis and nucleotide exchange. Immobilization of the converter enables RuvB to convert the ATP-contained energy into a lever motion, pulling 2 nucleotides of DNA out of the RuvA tetramer per ATP hydrolyzed, thus driving DNA branch migration. The RuvB motors rotate together with the DNA substrate, which together with the progressing nucleotide cycle form the mechanistic basis for DNA recombination by continuous HJ branch migration. Branch migration allows RuvC to scan DNA until it finds its consensus sequence, where it cleaves and resolves cruciform DNA. This Acaryochloris marina (strain MBIC 11017) protein is Holliday junction branch migration complex subunit RuvB.